The sequence spans 495 residues: Formin-like protein 17 (495 aa).

The disordered stretch occupies residues 1–92 (MDIRELIDIT…HNLKGQGQTR (92 aa)). A compositionally biased stretch (pro residues) spans 19 to 29 (GPPPPPPPPLL). Over residues 30–39 (QPHHSALSSS) the composition is skewed to low complexity. In terms of domain architecture, FH2 spans 86–486 (KGQGQTRKAN…RAQKEAENEK (401 aa)).

Belongs to the formin-like family. Class-II subfamily.

The chain is Formin-like protein 17 (FH17) from Arabidopsis thaliana (Mouse-ear cress).